The sequence spans 288 residues: Alpha/beta hydrolase domain-containing protein 17B (288 aa).

Catalysis depends on charge relay system residues Ser-170, Asp-235, and His-264.

Belongs to the AB hydrolase superfamily. ABHD17 family. Post-translationally, palmitoylated on cysteine residues located in a cysteine cluster at the N-terminus which promotes membrane localization.

It localises to the cell membrane. It is found in the recycling endosome membrane. Its subcellular location is the cell projection. The protein resides in the dendritic spine. The protein localises to the postsynaptic density membrane. It carries out the reaction S-hexadecanoyl-L-cysteinyl-[protein] + H2O = L-cysteinyl-[protein] + hexadecanoate + H(+). Its function is as follows. Hydrolyzes fatty acids from S-acylated cysteine residues in proteins. Has depalmitoylating activity towards nras. The chain is Alpha/beta hydrolase domain-containing protein 17B from Xenopus laevis (African clawed frog).